The chain runs to 53 residues: Conotoxin Bu27 (53 aa).

Positions 1–12 are excised as a propeptide; sequence ASDGRNAVVHER. The residue at position 14 (Pro-14) is a 4-hydroxyproline. Position 15 is a 4-carboxyglutamate (Glu-15). Thr-19 and Thr-21 each carry an O-linked (HexNAc...) threonine glycan. Pro-29, Pro-34, Pro-35, Pro-43, Pro-44, and Pro-48 each carry 4-hydroxyproline. Proline amide is present on Pro-48. Residues 49–53 constitute a propeptide that is removed on maturation; it reads GRRND.

This sequence belongs to the conotoxin A superfamily. Contains 3 disulfide bonds. As to expression, expressed by the venom duct.

It is found in the secreted. Its function is as follows. Probable neurotoxin with ion channel inhibitor activity. The protein is Conotoxin Bu27 of Conus bullatus (Bubble cone).